The primary structure comprises 300 residues: MEPQYARLVKSAALAATALASILLLIKIVAWYHTGSVSLLAALVDSLVDIAASLTNLLVVRYSLQPADEEHTFGHGKAESLAALAQSMFISGSALFLFLTGFQHLYSPETLRDPGVGIAVTVVALFSTLLLVTYQRWVVRKTRSQAVRADMLHYQSDVMMNGAILIALALSWYGFQRADALFALAIGVYILYSALRMGHEAVQSLLDRALPDDERQAIIDVISSWPGVKGAHDLRTRQSGPTRFIQLHLEMDDALPLMQAHLLAEQVEQALLHRFPGADVLIHQDPCSVVPEGRQGRWEL.

A run of 4 helical transmembrane segments spans residues 12-32, 40-60, 82-102, and 114-134; these read AALA…VAWY, LAAL…LLVV, AALA…LTGF, and PGVG…LVTY. Positions 45 and 49 each coordinate Zn(2+). Zn(2+) is bound by residues H153 and D157. Helical transmembrane passes span 155-175 and 178-198; these read QSDV…WYGF and ADAL…LRMG.

It belongs to the cation diffusion facilitator (CDF) transporter (TC 2.A.4) family. FieF subfamily. As to quaternary structure, homodimer.

Its subcellular location is the cell inner membrane. It carries out the reaction Zn(2+)(in) + H(+)(out) = Zn(2+)(out) + H(+)(in). The catalysed reaction is Cd(2+)(in) + H(+)(out) = Cd(2+)(out) + H(+)(in). It catalyses the reaction Fe(2+)(in) + H(+)(out) = Fe(2+)(out) + H(+)(in). Functionally, divalent metal cation transporter which exports Zn(2+), Cd(2+) and possibly Fe(2+). May be involved in zinc and iron detoxification by efflux. This chain is Cation-efflux pump FieF, found in Serratia proteamaculans (strain 568).